Here is a 372-residue protein sequence, read N- to C-terminus: Aminomethyltransferase (372 aa).

Belongs to the GcvT family. The glycine cleavage system is composed of four proteins: P, T, L and H.

The catalysed reaction is N(6)-[(R)-S(8)-aminomethyldihydrolipoyl]-L-lysyl-[protein] + (6S)-5,6,7,8-tetrahydrofolate = N(6)-[(R)-dihydrolipoyl]-L-lysyl-[protein] + (6R)-5,10-methylene-5,6,7,8-tetrahydrofolate + NH4(+). Its function is as follows. The glycine cleavage system catalyzes the degradation of glycine. This chain is Aminomethyltransferase, found in Burkholderia cenocepacia (strain ATCC BAA-245 / DSM 16553 / LMG 16656 / NCTC 13227 / J2315 / CF5610) (Burkholderia cepacia (strain J2315)).